Consider the following 105-residue polypeptide: Class I hydrophobin 1 (105 aa).

Residues 1–17 (MQFTSFAILAISAVASA) form the signal peptide. 4 disulfides stabilise this stretch: cysteine 36–cysteine 85, cysteine 44–cysteine 78, cysteine 45–cysteine 63, and cysteine 86–cysteine 100. Residues asparagine 48, asparagine 67, and asparagine 97 are each glycosylated (N-linked (GlcNAc...) asparagine).

This sequence belongs to the fungal hydrophobin family. As to quaternary structure, self-assembles to form functional amyloid fibrils called rodlets. Self-assembly into fibrillar rodlets occurs spontaneously at hydrophobic:hydrophilic interfaces and the rodlets further associate laterally to form amphipathic monolayers. As to expression, abundant on conidia and aerial structures formed in vitro and emerging from disease lesions on infected tomato plants.

The protein resides in the secreted. It localises to the cell wall. Aerial growth, conidiation, and dispersal of filamentous fungi in the environment rely upon a capability of their secreting small amphipathic proteins called hydrophobins (HPBs) with low sequence identity. Class I can self-assemble into an outermost layer of rodlet bundles on aerial cell surfaces, conferring cellular hydrophobicity that supports fungal growth, development and dispersal; whereas Class II form highly ordered films at water-air interfaces through intermolecular interactions but contribute nothing to the rodlet structure. Hcf-1 is a class I hydrophobin that is not necessary for the development of hyphae or conidia but acts as the main determinant of conidium hydrophobicity and, thus, is required for efficient water-mediated dispersal of conidia. Forms a component of the rodlet layer, but other hydrophobins must also participate in this proces. The sequence is that of Class I hydrophobin 1 from Passalora fulva (Tomato leaf mold).